A 301-amino-acid polypeptide reads, in one-letter code: Indole-3-glycerol phosphate synthase (301 aa).

This sequence belongs to the TrpC family.

The catalysed reaction is 1-(2-carboxyphenylamino)-1-deoxy-D-ribulose 5-phosphate + H(+) = (1S,2R)-1-C-(indol-3-yl)glycerol 3-phosphate + CO2 + H2O. It participates in amino-acid biosynthesis; L-tryptophan biosynthesis; L-tryptophan from chorismate: step 4/5. In Prochlorococcus marinus (strain MIT 9313), this protein is Indole-3-glycerol phosphate synthase.